A 95-amino-acid chain; its full sequence is Protein TusB (95 aa).

The protein belongs to the DsrH/TusB family. Heterohexamer, formed by a dimer of trimers. The hexameric TusBCD complex contains 2 copies each of TusB, TusC and TusD. The TusBCD complex interacts with TusE.

It is found in the cytoplasm. In terms of biological role, part of a sulfur-relay system required for 2-thiolation of 5-methylaminomethyl-2-thiouridine (mnm(5)s(2)U) at tRNA wobble positions. This chain is Protein TusB, found in Yersinia enterocolitica serotype O:8 / biotype 1B (strain NCTC 13174 / 8081).